The sequence spans 474 residues: PRAME family member 8 (474 aa).

One copy of the LRR 1; degenerate repeat lies at 97–122 (QSKLQVLDLRNVDENFCDIFSGATAS). One copy of the LRR 2; degenerate repeat lies at 177-201 (HVCCKELQVFGMPIHSIIEVLNMVE). The stretch at 202 to 228 (LDCIQEVEVCCPWELSTLVKFAPYLGQ) is one LRR 3; degenerate repeat. Residues 229–264 (MRNLRKLVLFNIRASACIPPDNKGQFIARFTSQFLK) form an LRR 4; degenerate repeat. LRR repeat units lie at residues 265-290 (LDYF…LRCL), 291-322 (QASL…RQLK), 323-341 (ELDL…PLTG), 347-374 (VATL…VLSR), and 375-399 (CSQL…LLRH).

The protein belongs to the PRAME family.

The protein is PRAME family member 8 of Homo sapiens (Human).